A 494-amino-acid chain; its full sequence is 5'-3' exonuclease PLD3 (494 aa).

At 1-37 the chain is on the cytoplasmic side; that stretch reads MNPKVEYKQIQSHDEAENQVLQHECHQAKARKYYRCA. The chain crosses the membrane as a helical; Signal-anchor for type II membrane protein span at residues 38–58; it reads VVIAIIITLLFCVLASQLLLF. Residues 59 to 494 are Lumenal-facing; the sequence is PLFSITSQTT…LSSWKEKCIF (436 aa). A glycan (N-linked (GlcNAc...) asparagine) is linked at Asn-100. Positions 198-225 constitute a PLD phosphodiesterase 1 domain; that stretch reads TDGVLHTKFWVVDSEHFYIGSANMDWRS. Catalysis depends on residues His-203, Lys-205, and Asp-210. N-linked (GlcNAc...) asparagine glycans are attached at residues Asn-238, Asn-260, Asn-270, Asn-286, and Asn-389. Positions 413 to 439 constitute a PLD phosphodiesterase 2 domain; it reads YARVNHNKYMVTDRVAYIGTSNWSGDY. Catalysis depends on residues His-418, Lys-420, and Asp-425. Residues Asn-434, Asn-451, and Asn-477 are each glycosylated (N-linked (GlcNAc...) asparagine).

It belongs to the phospholipase D family. In terms of processing, N-glycosylated. Post-translationally, proteolytically processed to a soluble form that is stable within endosomes and lysosomes. During transport through the secretory pathway becomes proteolysed by cysteine proteases, thereby releasing a stable soluble lysosomal lumenal polypeptide, whereas the transmembrane-bound fragment is rapidly degraded. Its transport route to lysosomes involves ubiquitination and the ESCRT complex. Ubiquitinated. Ubiquitination mediates sorting into lysosomes.

The protein resides in the endoplasmic reticulum membrane. It is found in the lysosome lumen. It localises to the early endosome membrane. Its subcellular location is the late endosome membrane. The protein localises to the golgi apparatus membrane. The protein resides in the endosome membrane. It catalyses the reaction Exonucleolytic cleavage in the 5'- to 3'-direction to yield nucleoside 3'-phosphates.. 5'-&gt;3' DNA exonuclease which digests single-stranded DNA (ssDNA). Regulates inflammatory cytokine responses via the degradation of nucleic acids, by reducing the concentration of ssDNA able to stimulate TLR9, a nucleotide-sensing receptor in collaboration with PLD4. May be important in myotube formation. Plays a role in lysosomal homeostasis. Involved in the regulation of endosomal protein sorting. The protein is 5'-3' exonuclease PLD3 (pld3) of Xenopus tropicalis (Western clawed frog).